The primary structure comprises 187 residues: MTADHNRALHDAPTARGGEVRQPDGDYFNALQTEVNDKGFLVTSTEDLFQWARTGSLWWMTFGLACCAVEMIHVNMPRYDMERFGAAPRASPRQSDVMIVAGTLCNKMAPALRKVYDQMSDPKYVISMGSCANGGGYYHYSYSVVRGCDRIVPVDIYVPGCPPTAEALLYGVMQLQRKIRRSGTIER.

Basic and acidic residues predominate over residues 1-10 (MTADHNRALH). The interval 1–22 (MTADHNRALHDAPTARGGEVRQ) is disordered. Cysteine 66, cysteine 67, cysteine 131, and cysteine 161 together coordinate [4Fe-4S] cluster.

Belongs to the complex I 20 kDa subunit family. In terms of assembly, NDH-1 is composed of 14 different subunits. Subunits NuoB, C, D, E, F, and G constitute the peripheral sector of the complex. Requires [4Fe-4S] cluster as cofactor.

It is found in the cell inner membrane. The catalysed reaction is a quinone + NADH + 5 H(+)(in) = a quinol + NAD(+) + 4 H(+)(out). NDH-1 shuttles electrons from NADH, via FMN and iron-sulfur (Fe-S) centers, to quinones in the respiratory chain. Couples the redox reaction to proton translocation (for every two electrons transferred, four hydrogen ions are translocated across the cytoplasmic membrane), and thus conserves the redox energy in a proton gradient. The protein is NADH-quinone oxidoreductase subunit B of Erythrobacter litoralis (strain HTCC2594).